Here is a 193-residue protein sequence, read N- to C-terminus: Hypoxanthine/guanine phosphoribosyltransferase (193 aa).

The protein belongs to the purine/pyrimidine phosphoribosyltransferase family. Archaeal HPRT subfamily. As to quaternary structure, homodimer.

The protein localises to the cytoplasm. It carries out the reaction IMP + diphosphate = hypoxanthine + 5-phospho-alpha-D-ribose 1-diphosphate. It catalyses the reaction GMP + diphosphate = guanine + 5-phospho-alpha-D-ribose 1-diphosphate. Its pathway is purine metabolism; IMP biosynthesis via salvage pathway; IMP from hypoxanthine: step 1/1. In terms of biological role, catalyzes a salvage reaction resulting in the formation of IMP that is energically less costly than de novo synthesis. The protein is Hypoxanthine/guanine phosphoribosyltransferase of Methanothermobacter thermautotrophicus (strain ATCC 29096 / DSM 1053 / JCM 10044 / NBRC 100330 / Delta H) (Methanobacterium thermoautotrophicum).